Reading from the N-terminus, the 202-residue chain is Small ribosomal subunit protein uS4 (202 aa).

The segment at 15–43 is disordered; it reads LGDLPGLTRKAAKRSNPPGQHGNARRKRS. An S4 RNA-binding domain is found at 90-152; sequence GRLDNVCFRL…KGSKKLAEGN (63 aa).

The protein belongs to the universal ribosomal protein uS4 family. Part of the 30S ribosomal subunit. Contacts protein S5. The interaction surface between S4 and S5 is involved in control of translational fidelity.

Functionally, one of the primary rRNA binding proteins, it binds directly to 16S rRNA where it nucleates assembly of the body of the 30S subunit. Its function is as follows. With S5 and S12 plays an important role in translational accuracy. The protein is Small ribosomal subunit protein uS4 of Prochlorococcus marinus (strain SARG / CCMP1375 / SS120).